The sequence spans 206 residues: Ras-related protein O-RAL (206 aa).

Residue 21-28 (GSGGVGKS) participates in GTP binding. Residues 43-51 (YEPTKADSY) carry the Effector region motif. Residues 68–72 (DTAGQ) and 128–131 (NKSD) contribute to the GTP site. Residues 180–189 (KMSENKDKNG) show a composition bias toward basic and acidic residues. Positions 180–206 (KMSENKDKNGKKSSRNKKSLRERCCIL) are disordered. Cys203 carries the cysteine methyl ester modification. Cys203 is lipidated: S-geranylgeranyl cysteine. A propeptide spans 204–206 (CIL) (removed in mature form).

It belongs to the small GTPase superfamily. Ras family.

The protein localises to the cell membrane. The enzyme catalyses GTP + H2O = GDP + phosphate + H(+). This Diplobatis ommata (Ocellated electric ray) protein is Ras-related protein O-RAL.